The primary structure comprises 217 residues: UDP-N-acetylglucosamine transferase subunit ALG14 (217 aa).

Residues 1 to 3 are Lumenal-facing; that stretch reads MLS. The chain crosses the membrane as a helical span at residues 4–26; the sequence is ILILAATAAGLVILLFQRLWTVL. Over 27–217 the chain is Cytoplasmic; sequence GPHHVTPRES…PKSVYLGRIV (191 aa).

Belongs to the ALG14 family. Forms with ALG13 the active heterodimeric UDP-N-acetylglucosamine transferase complex.

The protein resides in the endoplasmic reticulum membrane. Part of the UDP-N-acetylglucosamine transferase complex that operates in the biosynthetic pathway of dolichol-linked oligosaccharides, the glycan precursors employed in protein asparagine (N)-glycosylation. The assembly of dolichol-linked oligosaccharides begins on the cytosolic side of the endoplasmic reticulum membrane and finishes in its lumen. The sequential addition of sugars to dolichol pyrophosphate produces dolichol-linked oligosaccharides containing fourteen sugars, including two GlcNAcs, nine mannoses and three glucoses. Once assembled, the oligosaccharides are transferred from the lipid to nascent proteins by oligosaccharyltransferases. Functions as a protein-membrane adapter recruiting ALG13 at the cytoplasmic face of the endoplasmic reticulum, where the complex catalyzes the second step of dolichol pyrophosphate biosynthesis, transferring a beta1,4-linked N-acetylglucosamine (GlcNAc) from UDP-GlcNAc to GlcNAc-pyrophosphatedolichol (Gn-PDol) to produce N,N'-diacetylchitobiosyl diphosphodolichol. N,N'-diacetylchitobiosyl diphosphodolichol is a substrate for ALG1, the following enzyme in the biosynthetic pathway. This is UDP-N-acetylglucosamine transferase subunit ALG14 from Mus musculus (Mouse).